A 144-amino-acid polypeptide reads, in one-letter code: 3-hydroxyacyl-[acyl-carrier-protein] dehydratase FabZ (144 aa).

The active site involves histidine 48.

The protein belongs to the thioester dehydratase family. FabZ subfamily.

The protein resides in the cytoplasm. It catalyses the reaction a (3R)-hydroxyacyl-[ACP] = a (2E)-enoyl-[ACP] + H2O. In terms of biological role, involved in unsaturated fatty acids biosynthesis. Catalyzes the dehydration of short chain beta-hydroxyacyl-ACPs and long chain saturated and unsaturated beta-hydroxyacyl-ACPs. In Bacillus cytotoxicus (strain DSM 22905 / CIP 110041 / 391-98 / NVH 391-98), this protein is 3-hydroxyacyl-[acyl-carrier-protein] dehydratase FabZ.